The sequence spans 726 residues: MVVAEQLEDVFVGGYLVIYASQDGAGEEYRLPKEVVARALPVEPGRVPVNINHDASCRVGSVISIVDVEKGLFFLGVVSGSLALAMFKYVARDLFRADDGDSPGGGAESETRSDEALPANTLSEREKFLYLLSNVLPSLSLSSARLADGYSPADDFFAHVALCELGKRDGTIAIYGSSPPEVLDAFSGLDDAAKRELARSAEEWTTSSRREEPVDEAMVSECLLRKFMNNAFLMDRGEYLRARRHLADVRRPKYLQAAETTCLSSANPRSSGKAAFSCEARGLDEAGAGAIGRAPESGMAASADQHAQDGIKIRLERSRSQIGPGAMSSVSQPAAAPYSGAMADSAAQVPSAQPPRIPCPPTGQTEMIYVPLGTYNDLVVSAAQARRGEDRRQQLSAPPPQHAQQIVQRETGINSSSPALAPAGRGSYASASHIMHQPAFQTQQPCWPQQQQYVQAPCGGHGIGYYGQAVSRRGGSSGDGAPTTRSTGAPGAGGLSMFGMQHAGPQTHFTAPLHGLPTGFPAHGSFLHAPGYLGAMPPIQVYAPQPQQHPPSLDTRIEALLAALEKERASEQGAAEGPQQSLVAGQNKKKALLKRSMEHQREEEEDDESAPEAPYFPGEAAASCKRQAKRQRAAAEGEEQVAPSFSDLIQGLAALHKDVAEMKASVAGIGAPQASQPTPVAQPEHEEPKQAPATVDASSSKKLKDSRRAAEKRRAADEFARIMSTE.

Active-site charge relay system residues include H53, S140, and H159. A disordered region spans residues Q321–T362. The span at A352–P361 shows a compositional bias: pro residues. The segment at T365 to Q384 is interaction with pAP. 4 disordered regions span residues A385–S427, R472–A492, R568–S644, and G668–E726. Residues H402–P418 are compositionally biased toward polar residues. Residues K702–A720 show a composition bias toward basic and acidic residues. The tract at residues S706–E726 is interaction with major capsid protein.

The protein belongs to the herpesviridae capsid scaffolding protein family. As to quaternary structure, homomultimer. Interacts with major capsid protein. Exists in a monomer-dimer equilibrium with the dimer being the active species. Capsid scaffolding protein is cleaved by assemblin after formation of the spherical procapsid. As a result, the capsid obtains its mature, icosahedral shape. Cleavages occur at two or more sites: release (R-site) and maturation (M-site).

Its subcellular location is the host cytoplasm. It localises to the host nucleus. The enzyme catalyses Cleaves -Ala-|-Ser- and -Ala-|-Ala- bonds in the scaffold protein.. Functionally, acts as a scaffold protein by binding major capsid protein in the cytoplasm, inducing the nuclear localization of both proteins. Multimerizes in the nucleus such as major capsid protein forms the icosahedral T=16 capsid. Autocatalytic cleavage releases the assembly protein, and subsequently abolishes interaction with major capsid protein. Cleavages products are evicted from the capsid before or during DNA packaging. Protease that plays an essential role in virion assembly within the nucleus. Catalyzes the cleavage of the assembly protein after formation of the spherical procapsid. By that cleavage, the capsid matures and gains its icosahedral shape. The cleavage sites seem to include -Ala-Ser-, -Ala-Ala-, as well as Ala-Thr bonds. Assemblin and cleavages products are evicted from the capsid before or during DNA packaging. Its function is as follows. Plays a major role in capsid assembly. Acts as a scaffold protein by binding major capsid protein. Multimerizes in the nucleus such as major capsid protein forms the icosahedral T=16 capsid. Cleaved by assemblin after capsid completion. The cleavages products are evicted from the capsid before or during DNA packaging. In Psittacid herpesvirus 1 (isolate Amazon parrot/-/97-0001/1997) (PsHV-1), this protein is Capsid scaffolding protein (UL26).